Reading from the N-terminus, the 419-residue chain is MAMRLILFFGALFGHIYCLETFVGDQVLEIVPSNEEQIKNLLQLEAQEHLQLDFWKSPTTPGETAHVRVPFVNVQAVKVFLESQGIAYSIMIEDVQVLLDKENEEMLFNRRRERSGNFNFGAYHTLEEISQEMDNLVAEHPGLVSKVNIGSSFENRPMNVLKFSTGGDKPAIWLDAGIHAREWVTQATALWTANKIVSDYGKDPSITSILDALDIFLLPVTNPDGYVFSQTKNRMWRKTRSKVSGSLCVGVDPNRNWDAGFGGPGASSNPCSDSYHGPSANSEVEVKSIVDFIKSHGKVKAFITLHSYSQLLMFPYGYKCTKLDDFDELSEVAQKAAQSLRSLHGTKYKVGPICSVIYQASGGSIDWSYDYGIKYSFAFELRDTGRYGFLLPARQILPTAEETWLGLKAIMEHVRDHPY.

The signal sequence occupies residues 1 to 18 (MAMRLILFFGALFGHIYC). Residues 19 to 114 (LETFVGDQVL…EMLFNRRRER (96 aa)) constitute a propeptide, activation peptide. The region spanning 122–414 (AYHTLEEISQ…LGLKAIMEHV (293 aa)) is the Peptidase M14 domain. Zn(2+)-binding residues include His179 and Glu182. Substrate-binding positions include 179-182 (HARE), Arg237, and 254-255 (NR). A disulfide bridge connects residues Cys248 and Cys271. His306 contributes to the Zn(2+) binding site. A substrate-binding site is contributed by 307–308 (SY). An intrachain disulfide couples Cys320 to Cys354. Tyr358 provides a ligand contact to substrate. The Proton donor/acceptor role is filled by Glu380.

The protein belongs to the peptidase M14 family. Zn(2+) serves as cofactor.

It localises to the secreted. It carries out the reaction Similar to that of carboxypeptidase A (EC 3.4.17.1), but with a preference for bulkier C-terminal residues.. Functionally, carboxypeptidase that catalyzes the release of a C-terminal amino acid, with a preference for large aromatic C-terminal residues. The sequence is that of Carboxypeptidase A2 (CPA2) from Homo sapiens (Human).